Consider the following 354-residue polypeptide: Uroporphyrinogen decarboxylase (354 aa).

Substrate is bound by residues R27–R31, D77, Y154, T209, and H327.

It belongs to the uroporphyrinogen decarboxylase family. As to quaternary structure, homodimer.

The protein localises to the cytoplasm. The catalysed reaction is uroporphyrinogen III + 4 H(+) = coproporphyrinogen III + 4 CO2. It participates in porphyrin-containing compound metabolism; protoporphyrin-IX biosynthesis; coproporphyrinogen-III from 5-aminolevulinate: step 4/4. Functionally, catalyzes the decarboxylation of four acetate groups of uroporphyrinogen-III to yield coproporphyrinogen-III. The sequence is that of Uroporphyrinogen decarboxylase from Pseudomonas putida (strain ATCC 700007 / DSM 6899 / JCM 31910 / BCRC 17059 / LMG 24140 / F1).